The chain runs to 147 residues: Large ribosomal subunit protein uL11 (147 aa).

It belongs to the universal ribosomal protein uL11 family. In terms of assembly, part of the ribosomal stalk of the 50S ribosomal subunit. Interacts with L10 and the large rRNA to form the base of the stalk. L10 forms an elongated spine to which L12 dimers bind in a sequential fashion forming a multimeric L10(L12)X complex. One or more lysine residues are methylated.

In terms of biological role, forms part of the ribosomal stalk which helps the ribosome interact with GTP-bound translation factors. The polypeptide is Large ribosomal subunit protein uL11 (Parabacteroides distasonis (strain ATCC 8503 / DSM 20701 / CIP 104284 / JCM 5825 / NCTC 11152)).